Here is a 157-residue protein sequence, read N- to C-terminus: Ribosome-binding factor A (157 aa).

The tract at residues 127 to 157 (QQQFGSEEASVEDEVLGDDVADDADETEGKD) is disordered. Positions 135–157 (ASVEDEVLGDDVADDADETEGKD) are enriched in acidic residues.

This sequence belongs to the RbfA family. As to quaternary structure, monomer. Binds 30S ribosomal subunits, but not 50S ribosomal subunits or 70S ribosomes.

The protein localises to the cytoplasm. In terms of biological role, one of several proteins that assist in the late maturation steps of the functional core of the 30S ribosomal subunit. Associates with free 30S ribosomal subunits (but not with 30S subunits that are part of 70S ribosomes or polysomes). Required for efficient processing of 16S rRNA. May interact with the 5'-terminal helix region of 16S rRNA. This Shewanella baltica (strain OS195) protein is Ribosome-binding factor A.